Reading from the N-terminus, the 145-residue chain is D-aminoacyl-tRNA deacylase (145 aa).

Positions 137 to 138 match the Gly-cisPro motif, important for rejection of L-amino acids motif; sequence GP.

The protein belongs to the DTD family. As to quaternary structure, homodimer.

Its subcellular location is the cytoplasm. It carries out the reaction glycyl-tRNA(Ala) + H2O = tRNA(Ala) + glycine + H(+). The enzyme catalyses a D-aminoacyl-tRNA + H2O = a tRNA + a D-alpha-amino acid + H(+). In terms of biological role, an aminoacyl-tRNA editing enzyme that deacylates mischarged D-aminoacyl-tRNAs. Also deacylates mischarged glycyl-tRNA(Ala), protecting cells against glycine mischarging by AlaRS. Acts via tRNA-based rather than protein-based catalysis; rejects L-amino acids rather than detecting D-amino acids in the active site. By recycling D-aminoacyl-tRNA to D-amino acids and free tRNA molecules, this enzyme counteracts the toxicity associated with the formation of D-aminoacyl-tRNA entities in vivo and helps enforce protein L-homochirality. This chain is D-aminoacyl-tRNA deacylase, found in Rhodopirellula baltica (strain DSM 10527 / NCIMB 13988 / SH1).